A 286-amino-acid polypeptide reads, in one-letter code: Tyrosine recombinase XerA (286 aa).

The region spanning 5 to 82 is the Core-binding (CB) domain; that stretch reads TLRSEVLEEF…ALKAYFKFEG (78 aa). The Tyr recombinase domain occupies 98–274; the sequence is TLPKSLTEEE…TAKHLKEAVE (177 aa). Active-site residues include Arg135, Lys160, His226, Arg229, and His252. The active-site O-(3'-phospho-DNA)-tyrosine intermediate is Tyr261.

It belongs to the 'phage' integrase family. XerA subfamily.

It is found in the cytoplasm. In terms of biological role, site-specific tyrosine recombinase, which acts by catalyzing the cutting and rejoining of the recombining DNA molecules. This chain is Tyrosine recombinase XerA, found in Pyrococcus furiosus (strain ATCC 43587 / DSM 3638 / JCM 8422 / Vc1).